Consider the following 196-residue polypeptide: Probable malonic semialdehyde reductase RutE (196 aa).

Belongs to the nitroreductase family. HadB/RutE subfamily. The cofactor is FMN.

The catalysed reaction is 3-hydroxypropanoate + NADP(+) = 3-oxopropanoate + NADPH + H(+). Its function is as follows. May reduce toxic product malonic semialdehyde to 3-hydroxypropionic acid, which is excreted. This is Probable malonic semialdehyde reductase RutE from Escherichia coli O81 (strain ED1a).